The chain runs to 320 residues: MAAHYLDFERPIADLESKIEELSKLSETAGPGAFESEIQALRDRAQQMRKEAYAGLDAWQKTMVARHPERPHLKDYIAGLIDEFVELRGDRKFADDQAIVGGLGRFRGVPVVVMGHEKGHDTTTRLKHNFGMARPEGYRKAVRLMDMAERFNLPVITFVDTAGAYPGLGAEERGQAEAIARSTERGLVLGTPMVATIVGEGGSGGAIALAGANKVLILEHSIYSVISPEGAASILWRDGARAKDAAANMKITAQDLIQLKIVDRIVEEPAGGAHSDPDAAIQSVGDAVEDELKALMKLSAAELKKQRAARFYAIGREGLQ.

In terms of domain architecture, CoA carboxyltransferase C-terminal spans 33–294; sequence AFESEIQALR…GDAVEDELKA (262 aa).

Belongs to the AccA family. In terms of assembly, acetyl-CoA carboxylase is a heterohexamer composed of biotin carboxyl carrier protein (AccB), biotin carboxylase (AccC) and two subunits each of ACCase subunit alpha (AccA) and ACCase subunit beta (AccD).

Its subcellular location is the cytoplasm. It carries out the reaction N(6)-carboxybiotinyl-L-lysyl-[protein] + acetyl-CoA = N(6)-biotinyl-L-lysyl-[protein] + malonyl-CoA. The protein operates within lipid metabolism; malonyl-CoA biosynthesis; malonyl-CoA from acetyl-CoA: step 1/1. Functionally, component of the acetyl coenzyme A carboxylase (ACC) complex. First, biotin carboxylase catalyzes the carboxylation of biotin on its carrier protein (BCCP) and then the CO(2) group is transferred by the carboxyltransferase to acetyl-CoA to form malonyl-CoA. This chain is Acetyl-coenzyme A carboxylase carboxyl transferase subunit alpha, found in Caulobacter sp. (strain K31).